The primary structure comprises 226 residues: ATP synthase subunit a 1 (226 aa).

5 helical membrane passes run 20 to 40 (LTIV…WLIT), 78 to 98 (YLPF…CTVI), 113 to 133 (ALAL…SGLV), 174 to 194 (MILV…MNIL), and 196 to 216 (LLTG…YIAA).

This sequence belongs to the ATPase A chain family. F-type ATPases have 2 components, CF(1) - the catalytic core - and CF(0) - the membrane proton channel. CF(1) has five subunits: alpha(3), beta(3), gamma(1), delta(1), epsilon(1). CF(0) has four main subunits: a, b, b' and c.

It localises to the cell inner membrane. Key component of the proton channel; it plays a direct role in the translocation of protons across the membrane. This chain is ATP synthase subunit a 1, found in Chlorobaculum parvum (strain DSM 263 / NCIMB 8327) (Chlorobium vibrioforme subsp. thiosulfatophilum).